A 356-amino-acid chain; its full sequence is Isopentenyl-diphosphate delta-isomerase (356 aa).

8-9 (RK) lines the substrate pocket. FMN is bound by residues 66-68 (AIT), S96, and N124. 96-98 (SQR) serves as a coordination point for substrate. Q160 is a binding site for substrate. Mg(2+) is bound at residue E161. FMN is bound by residues K201, T231, 280 to 282 (GIR), and 301 to 302 (AL).

The protein belongs to the IPP isomerase type 2 family. In terms of assembly, homooctamer. Dimer of tetramers. The cofactor is FMN. Requires NADPH as cofactor. It depends on Mg(2+) as a cofactor.

The protein resides in the cytoplasm. It catalyses the reaction isopentenyl diphosphate = dimethylallyl diphosphate. Functionally, involved in the biosynthesis of isoprenoids. Catalyzes the 1,3-allylic rearrangement of the homoallylic substrate isopentenyl (IPP) to its allylic isomer, dimethylallyl diphosphate (DMAPP). This chain is Isopentenyl-diphosphate delta-isomerase, found in Methanococcus aeolicus (strain ATCC BAA-1280 / DSM 17508 / OCM 812 / Nankai-3).